We begin with the raw amino-acid sequence, 131 residues long: Snaclec A13 (131 aa).

Disulfide bonds link C4–C15, C32–C125, and C100–C117. One can recognise a C-type lectin domain in the interval 11 to 126; that stretch reads YEGHCYKVFN…CELAYHFICM (116 aa).

It belongs to the snaclec family. As to quaternary structure, heterodimer; disulfide-linked. In terms of tissue distribution, expressed by the venom gland.

Its subcellular location is the secreted. Functionally, interferes with one step of hemostasis (modulation of platelet aggregation, or coagulation cascade, for example). In Macrovipera lebetinus (Levantine viper), this protein is Snaclec A13.